The following is a 687-amino-acid chain: DNA ligase (687 aa).

NAD(+) contacts are provided by residues 34–38, 83–84, and Glu-117; these read DAEYD and SL. Catalysis depends on Lys-119, which acts as the N6-AMP-lysine intermediate. NAD(+)-binding residues include Arg-140, Glu-182, Lys-298, and Lys-322. 4 residues coordinate Zn(2+): Cys-416, Cys-419, Cys-434, and Cys-439. In terms of domain architecture, BRCT spans 609 to 687; the sequence is EARGPFAGKT…EEEFVRLLKE (79 aa).

The protein belongs to the NAD-dependent DNA ligase family. LigA subfamily. It depends on Mg(2+) as a cofactor. The cofactor is Mn(2+).

It carries out the reaction NAD(+) + (deoxyribonucleotide)n-3'-hydroxyl + 5'-phospho-(deoxyribonucleotide)m = (deoxyribonucleotide)n+m + AMP + beta-nicotinamide D-nucleotide.. Functionally, DNA ligase that catalyzes the formation of phosphodiester linkages between 5'-phosphoryl and 3'-hydroxyl groups in double-stranded DNA using NAD as a coenzyme and as the energy source for the reaction. It is essential for DNA replication and repair of damaged DNA. The polypeptide is DNA ligase (Anaeromyxobacter dehalogenans (strain 2CP-1 / ATCC BAA-258)).